Reading from the N-terminus, the 307-residue chain is tRNA pseudouridine synthase B (307 aa).

Aspartate 38 acts as the Nucleophile in catalysis.

The protein belongs to the pseudouridine synthase TruB family. Type 1 subfamily.

It catalyses the reaction uridine(55) in tRNA = pseudouridine(55) in tRNA. Responsible for synthesis of pseudouridine from uracil-55 in the psi GC loop of transfer RNAs. The chain is tRNA pseudouridine synthase B from Bacillus anthracis.